Here is a 754-residue protein sequence, read N- to C-terminus: 5-methyltetrahydropteroyltriglutamate--homocysteine methyltransferase (754 aa).

5-methyltetrahydropteroyltri-L-glutamate is bound by residues 17–20 (RELK) and Lys117. Residues 431–433 (IGS) and Glu484 each bind L-homocysteine. L-methionine is bound by residues 431–433 (IGS) and Glu484. 5-methyltetrahydropteroyltri-L-glutamate contacts are provided by residues 515–516 (RC) and Trp561. Asp599 is an L-homocysteine binding site. Residue Asp599 participates in L-methionine binding. Residue Glu605 participates in 5-methyltetrahydropteroyltri-L-glutamate binding. 3 residues coordinate Zn(2+): His641, Cys643, and Glu665. The active-site Proton donor is the His694. Residue Cys726 participates in Zn(2+) binding.

The protein belongs to the vitamin-B12 independent methionine synthase family. It depends on Zn(2+) as a cofactor.

The enzyme catalyses 5-methyltetrahydropteroyltri-L-glutamate + L-homocysteine = tetrahydropteroyltri-L-glutamate + L-methionine. It functions in the pathway amino-acid biosynthesis; L-methionine biosynthesis via de novo pathway; L-methionine from L-homocysteine (MetE route): step 1/1. Catalyzes the transfer of a methyl group from 5-methyltetrahydrofolate to homocysteine resulting in methionine formation. In Salmonella typhimurium (strain LT2 / SGSC1412 / ATCC 700720), this protein is 5-methyltetrahydropteroyltriglutamate--homocysteine methyltransferase.